The primary structure comprises 147 residues: Large ribosomal subunit protein bL9 (147 aa).

Belongs to the bacterial ribosomal protein bL9 family.

Binds to the 23S rRNA. This is Large ribosomal subunit protein bL9 from Campylobacter jejuni subsp. jejuni serotype O:2 (strain ATCC 700819 / NCTC 11168).